The chain runs to 147 residues: Heavy metal-dependent transcription regulator 1 (147 aa).

The HTH merR-type domain occupies 1–70 (MNIGQASKVV…VEQIKDLLAL (70 aa)). A DNA-binding region (H-T-H motif) is located at residues 3 to 22 (IGQASKVVSGVSSKMIRYYE).

Its subcellular location is the cytoplasm. In terms of biological role, transcriptional regulator involved in acid tolerance. Binds copper. This is Heavy metal-dependent transcription regulator 1 (hmrR1) from Rhizobium meliloti (strain 1021) (Ensifer meliloti).